The chain runs to 252 residues: MILHAQAKHGKPGLPWLVFLHGFSGDCHEWQEVGEAFADYSRLYVDLPGHGGSAAISVDGFDDVTDLLRKTLVSYNILDFWLVGYSLGGRVAMMAACQGLAGLCGVIVEGGHPGLQNAEQRAERQRSDRQWAQRFCTEPLTAVFADWYQQPVFASLNDDQRRELVALRSNNNGATLAAMLEATSLAVQPDLRANLSARTFAFYYLCGERDSKFRALAAELAADCHVIPRAGHNAHRENPAGVIASLAQILRF.

This sequence belongs to the AB hydrolase superfamily. MenH family. In terms of assembly, monomer.

The enzyme catalyses 5-enolpyruvoyl-6-hydroxy-2-succinyl-cyclohex-3-ene-1-carboxylate = (1R,6R)-6-hydroxy-2-succinyl-cyclohexa-2,4-diene-1-carboxylate + pyruvate. Its pathway is quinol/quinone metabolism; 1,4-dihydroxy-2-naphthoate biosynthesis; 1,4-dihydroxy-2-naphthoate from chorismate: step 3/7. It functions in the pathway quinol/quinone metabolism; menaquinone biosynthesis. Its function is as follows. Catalyzes a proton abstraction reaction that results in 2,5-elimination of pyruvate from 2-succinyl-5-enolpyruvyl-6-hydroxy-3-cyclohexene-1-carboxylate (SEPHCHC) and the formation of 2-succinyl-6-hydroxy-2,4-cyclohexadiene-1-carboxylate (SHCHC). The polypeptide is 2-succinyl-6-hydroxy-2,4-cyclohexadiene-1-carboxylate synthase (Escherichia coli (strain SE11)).